Reading from the N-terminus, the 492-residue chain is Signal transduction histidine-protein kinase/phosphatase MprB (492 aa).

Residues 1–27 (MAFPPNSWRPTGPLPTSSLSLRWRVMM) are Cytoplasmic-facing. Residues 28-48 (LAMSMVALVVVLMAVAVYAVV) traverse the membrane as a helical segment. At 49–165 (SRALYDDLDN…TVQVLRRLGT (117 aa)) the chain is on the extracellular side. Residues 166–186 (VLLIVGGIGVAVAAIAGGAVA) traverse the membrane as a helical segment. Residues 187–239 (RAGLRPVGRLTEAAERVARTDDLRPIPVVGSDELARLTEAFNMMLRALAESRE) form the HAMP domain. Over 187 to 492 (RAGLRPVGRL…DRGGHTVATE (306 aa)) the chain is Cytoplasmic. Residues 247 to 467 (DAGHELRTPL…SVHMLLPGQR (221 aa)) enclose the Histidine kinase domain. Position 250 is a phosphohistidine; by autocatalysis (H250). A disordered region spans residues 470 to 492 (DPGATRSAEGFVDDRGGHTVATE).

It depends on Mg(2+) as a cofactor. Requires Mn(2+) as cofactor. Post-translationally, autophosphorylated.

The protein resides in the cell membrane. It carries out the reaction ATP + protein L-histidine = ADP + protein N-phospho-L-histidine.. Functionally, member of the two-component regulatory system MprB/MprA which contributes to maintaining a balance among several systems involved in stress resistance and is required for establishment and maintenance of persistent infection in the host. In response to environmental signals MprB acts both as a membrane-associated protein kinase that undergoes autophosphorylation and subsequently transfers the phosphate to MprA, and a protein phosphatase that dephosphorylates phospho-MprA. In Mycolicibacterium smegmatis (strain ATCC 700084 / mc(2)155) (Mycobacterium smegmatis), this protein is Signal transduction histidine-protein kinase/phosphatase MprB (mprB).